Here is an 853-residue protein sequence, read N- to C-terminus: Leucine-rich repeat and death domain-containing protein 1 (853 aa).

Positions 1-78 are disordered; it reads MSEDGSNVEP…EEKNTGIPFS (78 aa). The segment covering 19–31 has biased composition (acidic residues); that stretch reads LEEPGSEISDLLD. Positions 56–65 are enriched in polar residues; the sequence is QSAASFTSQL. 26 LRR repeats span residues 133–157, 159–180, 183–204, 206–227, 229–251, 252–274, 275–297, 298–319, 321–342, 344–365, 367–388, 390–411, 413–435, 436–457, 459–481, 482–503, 505–527, 528–549, 551–573, 574–596, 597–618, 620–641, 646–668, 669–690, 692–713, and 715–736; these read MKSDNFTVNLDAKGLQEFPVDIVKV, YVKYLYLDKNQIKNFQGIDPGD, GLEILSLQENGLSSIPLEIQLF, NLKILNASYNEISQIPKELLQL, NMRQLLLNSNHIDTLPSGLEHLR, YLETLSLGKNMLTYIPDSLSSLK, NLRILNLEYNQLTIFSKSLCFLP, KLNSLNLTGNMIGSLPKEVREL, NLESLLMDHNKLTFLAVEIFQL, KIKELHLADNKLEAISPKIENF, ELRLLNLDKNLLQSIPKKISHC, NLESLSLSDNNIEELPKKIRKL, NLRQLHVNRNKMITMTEEISHLS, NIHILEFSGNQITHVPIEIKNC, KITRVELNYNNIMYFPVGLCALQ, SLDYLSFNGNYISEIPVDMSFS, QLLHLELNRNKLTVFSKHLCSLT, NLEYLDLAKNQIMTIPSCISAM, SLHVLILSDNKFESFPKELCSLK, NLRVLDISENKLQKIPLEISKLK, RIQKLNLSNNIFTNFPVELCQL, TLEELNISQTSGKKLTRLPEEV, QLKILNISNNAIKDIPKNIGELR, SLVSFYASNNQISSLPSSFLSL, VLQSLDLRGNNMTALPSGIYKL, and SLKEINFDDNPLMRPPMEICKG. Residues 757–845 form the Death domain; that stretch reads LEKIFNIVAN…DIMDKITALN (89 aa).

The sequence is that of Leucine-rich repeat and death domain-containing protein 1 (Lrrd1) from Mus musculus (Mouse).